A 218-amino-acid polypeptide reads, in one-letter code: Hypoxanthine-guanine phosphoribosyltransferase (218 aa).

A2 carries the post-translational modification N-acetylalanine. Residue K69 participates in GMP binding. K103 carries the post-translational modification N6-acetyllysine. K115 participates in a covalent cross-link: Glycyl lysine isopeptide (Lys-Gly) (interchain with G-Cter in SUMO1); alternate. Residue K115 forms a Glycyl lysine isopeptide (Lys-Gly) (interchain with G-Cter in SUMO2); alternate linkage. GMP is bound by residues 134–142, K166, 186–188, and D194; these read EDIIDTGKT and KFV. D138 acts as the Proton acceptor in catalysis. Position 142 is a phosphothreonine (T142). Residue D194 participates in Mg(2+) binding.

Belongs to the purine/pyrimidine phosphoribosyltransferase family. Homotetramer. The cofactor is Mg(2+).

Its subcellular location is the cytoplasm. The enzyme catalyses IMP + diphosphate = hypoxanthine + 5-phospho-alpha-D-ribose 1-diphosphate. The catalysed reaction is GMP + diphosphate = guanine + 5-phospho-alpha-D-ribose 1-diphosphate. It participates in purine metabolism; IMP biosynthesis via salvage pathway; IMP from hypoxanthine: step 1/1. Functionally, converts guanine to guanosine monophosphate, and hypoxanthine to inosine monophosphate. Transfers the 5-phosphoribosyl group from 5-phosphoribosylpyrophosphate onto the purine. Plays a central role in the generation of purine nucleotides through the purine salvage pathway. The polypeptide is Hypoxanthine-guanine phosphoribosyltransferase (HPRT1) (Cricetulus griseus (Chinese hamster)).